The following is a 274-amino-acid chain: Diaminopimelate epimerase (274 aa).

Residues Asn11, Gln44, and Asn64 each coordinate substrate. Cys73 serves as the catalytic Proton donor. Residues 74–75 (GN), Asn157, Asn190, and 208–209 (ER) contribute to the substrate site. Catalysis depends on Cys217, which acts as the Proton acceptor. Position 218-219 (218-219 (GS)) interacts with substrate.

The protein belongs to the diaminopimelate epimerase family. Homodimer.

It localises to the cytoplasm. The catalysed reaction is (2S,6S)-2,6-diaminopimelate = meso-2,6-diaminopimelate. The protein operates within amino-acid biosynthesis; L-lysine biosynthesis via DAP pathway; DL-2,6-diaminopimelate from LL-2,6-diaminopimelate: step 1/1. Functionally, catalyzes the stereoinversion of LL-2,6-diaminopimelate (L,L-DAP) to meso-diaminopimelate (meso-DAP), a precursor of L-lysine and an essential component of the bacterial peptidoglycan. The polypeptide is Diaminopimelate epimerase (Cronobacter sakazakii (strain ATCC BAA-894) (Enterobacter sakazakii)).